Consider the following 126-residue polypeptide: 13 kDa ribonucleoprotein-associated protein (126 aa).

It belongs to the eukaryotic ribosomal protein eL8 family. As to quaternary structure, component of the U3 snoRNP particle. Binds to the C'/D and B/C motifs in U3 snoRNA. Component of the 25S U4/U6.U5 tri-snRNP particle, a subcomplex of the spliceosome. Binds to the 5' stem-loop of U4 snRNA.

It localises to the nucleus. Its subcellular location is the nucleolus. Its function is as follows. Common component of the spliceosome and rRNA processing machinery. In association with the spliceosomal U4/U6.U5 tri-snRNP particle, required for splicing of pre-mRNA. In association with box C/D snoRNPs, required for processing of pre-ribosomal RNA (rRNA) and site-specific 2'-O-methylation of substrate RNAs. Essential for the accumulation and stability of U4 snRNA, U6 snRNA, and box C/D snoRNAs. The chain is 13 kDa ribonucleoprotein-associated protein (SNU13) from Debaryomyces hansenii (strain ATCC 36239 / CBS 767 / BCRC 21394 / JCM 1990 / NBRC 0083 / IGC 2968) (Yeast).